We begin with the raw amino-acid sequence, 206 residues long: FMN-dependent NADH:quinone oxidoreductase 4 (206 aa).

Residues serine 10 and serine 136–glycine 139 contribute to the FMN site.

The protein belongs to the azoreductase type 1 family. In terms of assembly, homodimer. FMN is required as a cofactor.

It catalyses the reaction 2 a quinone + NADH + H(+) = 2 a 1,4-benzosemiquinone + NAD(+). The catalysed reaction is N,N-dimethyl-1,4-phenylenediamine + anthranilate + 2 NAD(+) = 2-(4-dimethylaminophenyl)diazenylbenzoate + 2 NADH + 2 H(+). Quinone reductase that provides resistance to thiol-specific stress caused by electrophilic quinones. Its function is as follows. Also exhibits azoreductase activity. Catalyzes the reductive cleavage of the azo bond in aromatic azo compounds to the corresponding amines. This is FMN-dependent NADH:quinone oxidoreductase 4 from Pseudomonas fluorescens (strain ATCC BAA-477 / NRRL B-23932 / Pf-5).